Reading from the N-terminus, the 325-residue chain is Neural proliferation differentiation and control protein 1 (325 aa).

The N-terminal stretch at 1-34 is a signal peptide; sequence MATPLPPPSPRHLRLLRLLLSGLVLGAALRGAAA. A disordered region spans residues 138–175; it reads QGLELGLPSTPGTPTPTPHTSLGSPVSSDPVHMSPLEP. Residues 182–202 form a helical membrane-spanning segment; that stretch reads GLALVLILAFCVAGAAALSVA. The residue at position 229 (serine 229) is a Phosphoserine. The interval 266–290 is disordered; it reads EPPKELDTASSDEENEDGDFTVYEC. Residues 275-284 show a composition bias toward acidic residues; it reads SSDEENEDGD.

The protein belongs to the NPDC1/cab-1 family. As to expression, strongly expressed in adult brain; especially in hippocampus, frontal lobe and temporal lobe.

It is found in the membrane. Its function is as follows. Suppresses oncogenic transformation in neural and non-neural cells and down-regulates neural cell proliferation. Might be involved in transcriptional regulation. This Homo sapiens (Human) protein is Neural proliferation differentiation and control protein 1 (NPDC1).